The sequence spans 274 residues: Diaminopimelate epimerase (274 aa).

N11, Q44, and N64 together coordinate substrate. The Proton donor role is filled by C73. Substrate is bound by residues 74–75 (GN), N157, N190, and 208–209 (ER). C217 (proton acceptor) is an active-site residue. 218 to 219 (GS) provides a ligand contact to substrate.

This sequence belongs to the diaminopimelate epimerase family. Homodimer.

It is found in the cytoplasm. The enzyme catalyses (2S,6S)-2,6-diaminopimelate = meso-2,6-diaminopimelate. The protein operates within amino-acid biosynthesis; L-lysine biosynthesis via DAP pathway; DL-2,6-diaminopimelate from LL-2,6-diaminopimelate: step 1/1. Functionally, catalyzes the stereoinversion of LL-2,6-diaminopimelate (L,L-DAP) to meso-diaminopimelate (meso-DAP), a precursor of L-lysine and an essential component of the bacterial peptidoglycan. The polypeptide is Diaminopimelate epimerase (Photorhabdus laumondii subsp. laumondii (strain DSM 15139 / CIP 105565 / TT01) (Photorhabdus luminescens subsp. laumondii)).